We begin with the raw amino-acid sequence, 393 residues long: S-adenosylmethionine synthase (393 aa).

Residue histidine 16 participates in ATP binding. Mg(2+) is bound at residue aspartate 18. K(+) is bound at residue glutamate 44. 2 residues coordinate L-methionine: glutamate 57 and glutamine 100. The tract at residues glutamine 100–glutamine 110 is flexible loop. ATP is bound by residues aspartate 167–lysine 169, arginine 238–phenylalanine 239, aspartate 247, arginine 253–lysine 254, alanine 270, and lysine 274. Residue aspartate 247 participates in L-methionine binding. Lysine 278 contributes to the L-methionine binding site.

It belongs to the AdoMet synthase family. Homotetramer; dimer of dimers. Mg(2+) is required as a cofactor. The cofactor is K(+).

The protein localises to the cytoplasm. The catalysed reaction is L-methionine + ATP + H2O = S-adenosyl-L-methionine + phosphate + diphosphate. The protein operates within amino-acid biosynthesis; S-adenosyl-L-methionine biosynthesis; S-adenosyl-L-methionine from L-methionine: step 1/1. Catalyzes the formation of S-adenosylmethionine (AdoMet) from methionine and ATP. The overall synthetic reaction is composed of two sequential steps, AdoMet formation and the subsequent tripolyphosphate hydrolysis which occurs prior to release of AdoMet from the enzyme. In Methylibium petroleiphilum (strain ATCC BAA-1232 / LMG 22953 / PM1), this protein is S-adenosylmethionine synthase.